Here is a 262-residue protein sequence, read N- to C-terminus: Mitochondrial calcium uniporter regulator 1 (262 aa).

A coiled-coil region spans residues 138 to 175 (EKSEFSALRTQNEKVKIELQQLKKQLNDSIVKVRASNK). A helical transmembrane segment spans residues 239 to 261 (TIKYLAGSVFTCLTIALGFYRLW).

This sequence belongs to the CCDC90 family.

The protein localises to the mitochondrion inner membrane. Functionally, key regulator of mitochondrial calcium uniporter (mcu) required for calcium entry into mitochondrion. The sequence is that of Mitochondrial calcium uniporter regulator 1 from Xenopus tropicalis (Western clawed frog).